The primary structure comprises 635 residues: Threonine--tRNA ligase (635 aa).

Residues 1–61 enclose the TGS domain; the sequence is MIKITLKDGK…HKDSSLEILT (61 aa). The catalytic stretch occupies residues 242 to 532; sequence DHRKLGKELD…LIEQYAGAFP (291 aa). 3 residues coordinate Zn(2+): C333, H384, and H509.

The protein belongs to the class-II aminoacyl-tRNA synthetase family. As to quaternary structure, homodimer. The cofactor is Zn(2+).

It localises to the cytoplasm. It carries out the reaction tRNA(Thr) + L-threonine + ATP = L-threonyl-tRNA(Thr) + AMP + diphosphate + H(+). Its function is as follows. Catalyzes the attachment of threonine to tRNA(Thr) in a two-step reaction: L-threonine is first activated by ATP to form Thr-AMP and then transferred to the acceptor end of tRNA(Thr). Also edits incorrectly charged L-seryl-tRNA(Thr). The protein is Threonine--tRNA ligase of Clostridium botulinum (strain Kyoto / Type A2).